Consider the following 202-residue polypeptide: Eukaryotic translation initiation factor isoform 4E (202 aa).

Positions 1–24 (MATEAPPPVDTTEVPPFTAAETAV) are disordered. Residues 46–51 (QGAAWG), Lys78, and 96–97 (WE) contribute to the mRNA site. Cys101 and Cys140 are disulfide-bonded. Residues 147-152 (RRSQDK) and 191-194 (KRER) each bind mRNA.

This sequence belongs to the eukaryotic initiation factor 4E family. EIF4F is a multi-subunit complex, the composition of which varies with external and internal environmental conditions. It is composed of at least EIF4A, EIF4E and EIF4G. EIF4E is also known to interact with other partners. In higher plants two isoforms of EIF4F have been identified, named isoform EIF4F and isoform EIF(iso)4F. Isoform EIF4F has subunits p220 and p26, whereas isoform EIF(iso)4F has subunits p82 and p28. As to quaternary structure, (Microbial infection) Interacts with viral genome-linked protein (VPg); this interaction is possible in susceptible hosts but impaired in resistant plants. Post-translationally, according to the redox status, the Cys-101-Cys-140 disulfide bridge may have a role in regulating protein function by affecting its ability to bind capped mRNA.

The protein resides in the cytoplasm. Its subcellular location is the nucleus. Functionally, component of the protein complex eIF4F, which is involved in the recognition of the mRNA cap, ATP-dependent unwinding of 5'-terminal secondary structure and recruitment of mRNA to the ribosome. Recognizes and binds the 7-methylguanosine-containing mRNA cap during an early step in the initiation of protein synthesis and facilitates ribosome binding by inducing the unwinding of the mRNAs secondary structures. Key component of recessive resistance to potyviruses. (Microbial infection) Susceptibility host factor required for viral infection by recruiting viral RNAs to the host ribosomal complex via an interaction with viral genome-linked protein (VPg). The sequence is that of Eukaryotic translation initiation factor isoform 4E from Capsicum annuum (Capsicum pepper).